The primary structure comprises 170 residues: Photosystem I assembly protein Ycf3 (170 aa).

3 TPR repeats span residues 35 to 68 (AFTY…EIDP), 72 to 105 (SYIL…NPFL), and 120 to 153 (GEQA…TPGN).

The protein belongs to the Ycf3 family.

It localises to the plastid. It is found in the chloroplast thylakoid membrane. Its function is as follows. Essential for the assembly of the photosystem I (PSI) complex. May act as a chaperone-like factor to guide the assembly of the PSI subunits. The sequence is that of Photosystem I assembly protein Ycf3 from Triticum aestivum (Wheat).